The following is a 116-amino-acid chain: Large ribosomal subunit protein bL20c (116 aa).

This sequence belongs to the bacterial ribosomal protein bL20 family.

The protein localises to the plastid. The protein resides in the chloroplast. In terms of biological role, binds directly to 23S ribosomal RNA and is necessary for the in vitro assembly process of the 50S ribosomal subunit. It is not involved in the protein synthesizing functions of that subunit. This chain is Large ribosomal subunit protein bL20c, found in Rhodomonas salina (Cryptomonas salina).